The following is a 58-amino-acid chain: Small ribosomal subunit protein uS14 (58 aa).

The segment at 1–21 (MSESETEQTGEHASHRTGQTH) is disordered. The segment covering 9–21 (TGEHASHRTGQTH) has biased composition (basic and acidic residues). Cys23, Cys26, Cys41, and Cys44 together coordinate Zn(2+).

This sequence belongs to the universal ribosomal protein uS14 family. Zinc-binding uS14 subfamily. As to quaternary structure, part of the 30S ribosomal subunit. Zn(2+) serves as cofactor.

Binds 16S rRNA, required for the assembly of 30S particles. The sequence is that of Small ribosomal subunit protein uS14 from Haloquadratum walsbyi (strain DSM 16790 / HBSQ001).